The following is a 1551-amino-acid chain: Pentafunctional AROM polypeptide (1551 aa).

Residues 1 to 379 (MSIEKVPILG…YQLKAHEVSK (379 aa)) are 3-dehydroquinate synthase. Residues 42–44 (DTN), 80–83 (ENNK), 111–113 (GGV), and Asp-116 each bind NAD(+). Residue Arg-127 coordinates 7-phospho-2-dehydro-3-deoxy-D-arabino-heptonate. 136 to 137 (TT) serves as a coordination point for NAD(+). 7-phospho-2-dehydro-3-deoxy-D-arabino-heptonate contacts are provided by Asp-143 and Lys-149. An NAD(+)-binding site is contributed by Lys-158. Residue Asn-159 participates in 7-phospho-2-dehydro-3-deoxy-D-arabino-heptonate binding. NAD(+) is bound by residues 176-179 (YLES) and Asn-187. Glu-191 is a Zn(2+) binding site. Residues 191-194 (EVVK) and Lys-243 each bind 7-phospho-2-dehydro-3-deoxy-D-arabino-heptonate. Residue Glu-253 is the Proton acceptor; for 3-dehydroquinate synthase activity of the active site. 7-phospho-2-dehydro-3-deoxy-D-arabino-heptonate contacts are provided by residues 257–261 (RNLLN) and His-264. His-264 contacts Zn(2+). His-268 (proton acceptor; for 3-dehydroquinate synthase activity) is an active-site residue. The 7-phospho-2-dehydro-3-deoxy-D-arabino-heptonate site is built by His-280 and Lys-351. His-280 lines the Zn(2+) pocket. Positions 392-838 (VHPFKQPPQE…WDILHSKFNI (447 aa)) are EPSP synthase. The tract at residues 858–1048 (DKSIIIIGMR…IPSGRSAALS (191 aa)) is shikimate kinase. 865-872 (GMRGTGKS) contributes to the ATP binding site. Residues 1049–1258 (LTVPDLNAIS…NEDGLLTIKE (210 aa)) are 3-dehydroquinase. The Schiff-base intermediate with substrate; for 3-dehydroquinate dehydratase activity role is filled by Lys-1194. The shikimate dehydrogenase stretch occupies residues 1271 to 1551 (AKKFWVIGSP…DVIHRAVVEE (281 aa)).

The protein in the N-terminal section; belongs to the sugar phosphate cyclases superfamily. Dehydroquinate synthase family. In the 2nd section; belongs to the EPSP synthase family. This sequence in the 3rd section; belongs to the shikimate kinase family. It in the 4th section; belongs to the type-I 3-dehydroquinase family. The protein in the C-terminal section; belongs to the shikimate dehydrogenase family. In terms of assembly, homodimer. Zn(2+) is required as a cofactor.

The protein resides in the cytoplasm. The catalysed reaction is 7-phospho-2-dehydro-3-deoxy-D-arabino-heptonate = 3-dehydroquinate + phosphate. It catalyses the reaction 3-dehydroquinate = 3-dehydroshikimate + H2O. The enzyme catalyses shikimate + NADP(+) = 3-dehydroshikimate + NADPH + H(+). It carries out the reaction shikimate + ATP = 3-phosphoshikimate + ADP + H(+). The catalysed reaction is 3-phosphoshikimate + phosphoenolpyruvate = 5-O-(1-carboxyvinyl)-3-phosphoshikimate + phosphate. The protein operates within metabolic intermediate biosynthesis; chorismate biosynthesis; chorismate from D-erythrose 4-phosphate and phosphoenolpyruvate: step 2/7. It functions in the pathway metabolic intermediate biosynthesis; chorismate biosynthesis; chorismate from D-erythrose 4-phosphate and phosphoenolpyruvate: step 3/7. Its pathway is metabolic intermediate biosynthesis; chorismate biosynthesis; chorismate from D-erythrose 4-phosphate and phosphoenolpyruvate: step 4/7. It participates in metabolic intermediate biosynthesis; chorismate biosynthesis; chorismate from D-erythrose 4-phosphate and phosphoenolpyruvate: step 5/7. The protein operates within metabolic intermediate biosynthesis; chorismate biosynthesis; chorismate from D-erythrose 4-phosphate and phosphoenolpyruvate: step 6/7. Functionally, the AROM polypeptide catalyzes 5 consecutive enzymatic reactions in prechorismate polyaromatic amino acid biosynthesis. This chain is Pentafunctional AROM polypeptide, found in Candida tropicalis (strain ATCC MYA-3404 / T1) (Yeast).